Reading from the N-terminus, the 414-residue chain is Membrane protein UL43 (414 aa).

6 helical membrane-spanning segments follow: residues 39 to 59, 61 to 81, 96 to 116, 121 to 141, 148 to 168, and 184 to 204; these read GFAH…VVLS, GPYA…LGFL, AWLR…GEAG, VPGP…LLVL, LFLL…VGGL, and AAAL…GDSF. The segment at 225-253 is disordered; it reads PRYAPEDAERPTDHGPLLPSTHHQRSPRV. Residues 228-237 are compositionally biased toward basic and acidic residues; that stretch reads APEDAERPTD. Helical transmembrane passes span 339–359 and 383–403; these read GLMF…AVWI and ATLR…GVLV.

This sequence belongs to the alphaherpesvirinae HHV-1 UL43 family.

The protein localises to the membrane. The protein is Membrane protein UL43 of Homo sapiens (Human).